The sequence spans 242 residues: Ubiquitin-conjugating enzyme E2 6 (242 aa).

Residues 1-217 are Cytoplasmic-facing; it reads MASRQAYKRL…QPAGNGTTSN (217 aa). The 159-residue stretch at 5–163 folds into the UBC core domain; the sequence is QAYKRLSKEY…FPELAEQNRR (159 aa). Cys-87 functions as the Glycyl thioester intermediate in the catalytic mechanism. A helical transmembrane segment spans residues 218-240; sequence SIGRSLLFVLFSLAALLVAVCYT.

Belongs to the ubiquitin-conjugating enzyme family.

It is found in the endoplasmic reticulum membrane. It carries out the reaction S-ubiquitinyl-[E1 ubiquitin-activating enzyme]-L-cysteine + [E2 ubiquitin-conjugating enzyme]-L-cysteine = [E1 ubiquitin-activating enzyme]-L-cysteine + S-ubiquitinyl-[E2 ubiquitin-conjugating enzyme]-L-cysteine.. It functions in the pathway protein modification; protein ubiquitination. In terms of biological role, catalyzes the covalent attachment of ubiquitin to other proteins. Functions in degradation of misfolded or regulated proteins localized in the endoplasmic reticulum (ER) lumen or membrane via the ubiquitin-proteasome system. Cognate E2 conjugating enzyme for the DOA10 ubiquitin ligase complex, which is part of the ERAD-C pathway responsible for the rapid degradation of membrane proteins with misfolded cytoplasmic domains. The sequence is that of Ubiquitin-conjugating enzyme E2 6 (UBC6) from Eremothecium gossypii (strain ATCC 10895 / CBS 109.51 / FGSC 9923 / NRRL Y-1056) (Yeast).